Reading from the N-terminus, the 357-residue chain is UDP-N-acetylglucosamine--N-acetylmuramyl-(pentapeptide) pyrophosphoryl-undecaprenol N-acetylglucosamine transferase (357 aa).

Residues 15 to 17 (TGG), Asn-124, Arg-165, Ser-194, and Gln-288 contribute to the UDP-N-acetyl-alpha-D-glucosamine site.

Belongs to the glycosyltransferase 28 family. MurG subfamily.

Its subcellular location is the cell inner membrane. The catalysed reaction is di-trans,octa-cis-undecaprenyl diphospho-N-acetyl-alpha-D-muramoyl-L-alanyl-D-glutamyl-meso-2,6-diaminopimeloyl-D-alanyl-D-alanine + UDP-N-acetyl-alpha-D-glucosamine = di-trans,octa-cis-undecaprenyl diphospho-[N-acetyl-alpha-D-glucosaminyl-(1-&gt;4)]-N-acetyl-alpha-D-muramoyl-L-alanyl-D-glutamyl-meso-2,6-diaminopimeloyl-D-alanyl-D-alanine + UDP + H(+). The protein operates within cell wall biogenesis; peptidoglycan biosynthesis. Its function is as follows. Cell wall formation. Catalyzes the transfer of a GlcNAc subunit on undecaprenyl-pyrophosphoryl-MurNAc-pentapeptide (lipid intermediate I) to form undecaprenyl-pyrophosphoryl-MurNAc-(pentapeptide)GlcNAc (lipid intermediate II). The protein is UDP-N-acetylglucosamine--N-acetylmuramyl-(pentapeptide) pyrophosphoryl-undecaprenol N-acetylglucosamine transferase of Trichormus variabilis (strain ATCC 29413 / PCC 7937) (Anabaena variabilis).